The sequence spans 101 residues: Large ribosomal subunit protein bL27 (101 aa).

The propeptide occupies Met-1–Phe-9.

The protein belongs to the bacterial ribosomal protein bL27 family. Post-translationally, the N-terminus is cleaved by ribosomal processing cysteine protease Prp.

The sequence is that of Large ribosomal subunit protein bL27 from Clostridium tetani (strain Massachusetts / E88).